Consider the following 188-residue polypeptide: Elongation factor P-like protein (188 aa).

It belongs to the elongation factor P family.

This chain is Elongation factor P-like protein, found in Aliivibrio fischeri (strain MJ11) (Vibrio fischeri).